We begin with the raw amino-acid sequence, 431 residues long: 5-methylthioadenosine/S-adenosylhomocysteine deaminase (431 aa).

H68 and H70 together coordinate Zn(2+). The substrate site is built by E97 and H186. H213 serves as a coordination point for Zn(2+). Positions 216 and 301 each coordinate substrate. D301 serves as a coordination point for Zn(2+).

Belongs to the metallo-dependent hydrolases superfamily. MTA/SAH deaminase family. The cofactor is Zn(2+).

It catalyses the reaction S-adenosyl-L-homocysteine + H2O + H(+) = S-inosyl-L-homocysteine + NH4(+). It carries out the reaction S-methyl-5'-thioadenosine + H2O + H(+) = S-methyl-5'-thioinosine + NH4(+). In terms of biological role, catalyzes the deamination of 5-methylthioadenosine and S-adenosyl-L-homocysteine into 5-methylthioinosine and S-inosyl-L-homocysteine, respectively. Is also able to deaminate adenosine. The polypeptide is 5-methylthioadenosine/S-adenosylhomocysteine deaminase (Halothermothrix orenii (strain H 168 / OCM 544 / DSM 9562)).